We begin with the raw amino-acid sequence, 545 residues long: Membrane protein insertase YidC (545 aa).

4 helical membrane-spanning segments follow: residues 350–370, 424–444, 461–481, and 498–518; these read IIGN…AVLY, LPML…FASV, ADPY…QTYL, and PLVF…YWVV.

It belongs to the OXA1/ALB3/YidC family. Type 1 subfamily. As to quaternary structure, interacts with the Sec translocase complex via SecD. Specifically interacts with transmembrane segments of nascent integral membrane proteins during membrane integration.

It is found in the cell inner membrane. Its function is as follows. Required for the insertion and/or proper folding and/or complex formation of integral membrane proteins into the membrane. Involved in integration of membrane proteins that insert both dependently and independently of the Sec translocase complex, as well as at least some lipoproteins. Aids folding of multispanning membrane proteins. The protein is Membrane protein insertase YidC of Neisseria gonorrhoeae (strain NCCP11945).